Reading from the N-terminus, the 298-residue chain is tRNA-uridine aminocarboxypropyltransferase 2 (298 aa).

Methionine 1 is modified (N-acetylmethionine). Basic and acidic residues predominate over residues methionine 1–leucine 10. Residues methionine 1–leucine 55 form a disordered region. Over residues glycine 34–alanine 45 the composition is skewed to low complexity. Serine 132 is subject to Phosphoserine. The short motif at aspartate 178–tryptophan 181 is the DXTW element.

Belongs to the TDD superfamily. DTWD2 family.

The protein localises to the nucleus. It localises to the cytoplasm. It carries out the reaction a uridine in tRNA + S-adenosyl-L-methionine = a 3-[(3S)-3-amino-3-carboxypropyl]uridine in tRNA + S-methyl-5'-thioadenosine + H(+). Functionally, catalyzes the formation of 3-(3-amino-3-carboxypropyl)uridine (acp3U) at position 20a in the D-loop of several cytoplasmic tRNAs (acp3U(20a)). Also has a weak activity to form acp3U at position 20 in the D-loop of tRNAs (acp3U(20)). Involved in glycoRNA biosynthesis by mediating formation of acp3U, which acts as an attachment site for N-glycans on tRNAs. GlycoRNAs consist of RNAs modified with secretory N-glycans that are presented on the cell surface. This is tRNA-uridine aminocarboxypropyltransferase 2 from Mus musculus (Mouse).